An 85-amino-acid chain; its full sequence is Neurotoxin 60.35 (85 aa).

The first 23 residues, 1 to 23 (MKFCVAVSLLIIASMAGVISVSG), serve as a signal peptide directing secretion. Residues 24–85 (YDVYPRDYAG…NFLSVIWKQC (62 aa)) form the LCN-type CS-alpha/beta domain. Intrachain disulfides connect cysteine 38–cysteine 60, cysteine 46–cysteine 65, and cysteine 50–cysteine 67.

The protein belongs to the long (3 C-C) scorpion toxin superfamily. As to expression, expressed by the venom gland.

The protein localises to the secreted. The chain is Neurotoxin 60.35 from Lychas mucronatus (Chinese swimming scorpion).